Reading from the N-terminus, the 461-residue chain is D-phenylhydantoinase (461 aa).

The a divalent metal cation site is built by histidine 59, histidine 61, and lysine 151. Position 151 is an N6-carboxylysine (lysine 151). Tyrosine 156 lines the substrate pocket. 2 residues coordinate a divalent metal cation: histidine 182 and histidine 239. Serine 286 contributes to the substrate binding site. Aspartate 313 contributes to the a divalent metal cation binding site. Substrate is bound at residue asparagine 335.

Belongs to the metallo-dependent hydrolases superfamily. Hydantoinase/dihydropyrimidinase family. Homotetramer. It depends on a divalent metal cation as a cofactor. Carboxylation allows a single lysine to coordinate two divalent metal cations.

It carries out the reaction D-5-phenylhydantoin + H2O = N-carbamoyl-D-phenylglycine + H(+). Catalyzes the stereospecific hydrolysis of the cyclic amide bond of D-hydantoin derivatives with an aromatic side chains at the 5'-position. Has no activity on dihydropyrimidines. The physiological function is unknown. The protein is D-phenylhydantoinase of Escherichia coli O17:K52:H18 (strain UMN026 / ExPEC).